A 599-amino-acid chain; its full sequence is MSMRSEYCGLVTEELLGQSVSLCGWVSRRRDHGGVIFIDLRDREGLVQVVCDPDRAEMFKAAEGVRNEFCLQIKGVVRARPEGTTNAALKSGKIEVLCHELIVLNPSITPPFQLDDDNLSETTRLTHRVLDLRRPQMQHNLRLRYRVAIEVRKYLDAQGFIDIETPMLTKSTPEGARDYLVPSRTNPGQFFALPQSPQLFKQLLMVANFDRYYQIVKCFRDEDLRADRQPEFTQIDCETSFLSEQEIRDLFEAMIRHVFKETIGVTLDEKFPVMLYSEAMRRFGSDKPDLRVKLEFTDLTDAVRDVDFKVFSTPANTKDGRVAAIRVPKGGELSRGDIDSYTEFVRIYGAKGLAWIKVNEVAKGRDGLQSPIVKNLHDEAVKAIIERTGAQDGDIIFFAADRAKVVNDSLGALRLKIGHSEFGKANGLVESGWKPLWVIDFPMFEYDEEDNRYVAAHHPFTSPKDEHLEYLETDPARCLAKAYDMVLNGWEIGGGSVRIHREEVQSKVFRALKINAEEAQAKFGFLLDALQYGAPPHGGIAFGLDRIVTMMAGADSIRDVIAFPKTQRAQCLLTQAPSEVDERQLRELHIRLRQPEPKA.

Residue E174 participates in L-aspartate binding. Residues 198–201 (QLFK) are aspartate. R220 is an L-aspartate binding site. Residues 220 to 222 (RDE) and Q229 contribute to the ATP site. H457 contacts L-aspartate. ATP is bound at residue E491. Position 498 (R498) interacts with L-aspartate. 543–546 (GLDR) is an ATP binding site.

This sequence belongs to the class-II aminoacyl-tRNA synthetase family. Type 1 subfamily. In terms of assembly, homodimer.

Its subcellular location is the cytoplasm. It carries out the reaction tRNA(Asx) + L-aspartate + ATP = L-aspartyl-tRNA(Asx) + AMP + diphosphate. Its function is as follows. Aspartyl-tRNA synthetase with relaxed tRNA specificity since it is able to aspartylate not only its cognate tRNA(Asp) but also tRNA(Asn). Reaction proceeds in two steps: L-aspartate is first activated by ATP to form Asp-AMP and then transferred to the acceptor end of tRNA(Asp/Asn). The sequence is that of Aspartate--tRNA(Asp/Asn) ligase from Paraburkholderia xenovorans (strain LB400).